Consider the following 308-residue polypeptide: Pycsar effector protein PaPycTIR (308 aa).

L54–R143 is a binding site for a nucleoside 3',5'-cyclic phosphate. Residues V160–Y278 are TIR-like.

It is found in the cytoplasm. The enzyme catalyses NAD(+) + H2O = ADP-D-ribose + nicotinamide + H(+). Functionally, pycsar (pyrimidine cyclase system for antiphage resistance) provides immunity against bacteriophage. The pyrimidine cyclase (PycC) synthesizes cyclic nucleotides in response to infection; these serve as specific second messenger signals. The signals activate the adjacent effector, leading to bacterial cell death and abortive phage infection. A clade A Pycsar system. In terms of biological role, the effector gene of a two-gene Pycsar system. Expression of this and adjacent uridylate cyclase PaPycC (AC P0DV40) probably confers resistance to bacteriophage. The genes are probably only expressed in response to bacteriophage infection. Probably only responds to cUMP (produced by its cognate NTP cyclase), acts by depleting cellular NAD(+) levels. The sequence is that of Pycsar effector protein PaPycTIR from Pseudomonas aeruginosa.